Here is a 445-residue protein sequence, read N- to C-terminus: MSNHQYFGTDGIRGRVGDSPITPDFVLKLGWAAGKVLARHGSRKIIIGKDTRISGYMLESALEAGLAAAGLSAAFTGPMPTPAIAYLTRTFRAEAGIVISASHNPFYDNGIKFFSIDGTKLPDEVEEAIEAELAKPLTCVESVELGKASRIVDAAGRYIEFCKGTFPGNLSLKGLKIVVDCANGATYHIAPSVLRELGATVVTLGCQPDGMNINQECGATDVRLLQSRVLAEKADLGIAYDGDGDRVIMVDHLGQKVNGDQILYVIAREKLRQGQLSGGVVGTLMSNMGLELALKQLGVPFVRSRVGDRYVLEKMQEKGWRIGAENSGHVILLDKTTTGDGIIAGLQVLSAMVGNHMNLHDLCSGMRLLPQILVNVRFAGQHDPLASAAVKQASDEVEQQLAGRGRVLLRKSGTEPLIRVMVEGEDTEQVSRLAHHIADAVKAAG.

The active-site Phosphoserine intermediate is the serine 102. Serine 102, aspartate 241, aspartate 243, and aspartate 245 together coordinate Mg(2+). Serine 102 carries the post-translational modification Phosphoserine.

Belongs to the phosphohexose mutase family. The cofactor is Mg(2+). Post-translationally, activated by phosphorylation.

It carries out the reaction alpha-D-glucosamine 1-phosphate = D-glucosamine 6-phosphate. Functionally, catalyzes the conversion of glucosamine-6-phosphate to glucosamine-1-phosphate. This Sodalis glossinidius (strain morsitans) protein is Phosphoglucosamine mutase.